Here is a 146-residue protein sequence, read N- to C-terminus: Large ribosomal subunit protein uL15 (146 aa).

Positions 1 to 59 are disordered; that stretch reads MRLEELKAPAGANKRTKRVGRGTGSGHGKTSTRGHKGQKSRSGGGVRPGFEGGQMPLQR. Residues 30–39 show a composition bias toward basic residues; the sequence is TSTRGHKGQK. A compositionally biased stretch (gly residues) spans 42-52; the sequence is SGGGVRPGFEG.

Belongs to the universal ribosomal protein uL15 family. In terms of assembly, part of the 50S ribosomal subunit.

In terms of biological role, binds to the 23S rRNA. This is Large ribosomal subunit protein uL15 from Syntrophomonas wolfei subsp. wolfei (strain DSM 2245B / Goettingen).